The chain runs to 301 residues: Putative carboxypeptidase slr1534 (301 aa).

Serine 116 (nucleophile) is an active-site residue. Active-site charge relay system residues include glutamate 206 and histidine 276.

Belongs to the peptidase S66 family.

The polypeptide is Putative carboxypeptidase slr1534 (Synechocystis sp. (strain ATCC 27184 / PCC 6803 / Kazusa)).